We begin with the raw amino-acid sequence, 521 residues long: DEAD-box ATP-dependent RNA helicase 12 (521 aa).

A disordered region spans residues Met-1–Thr-97. A compositionally biased stretch (gly residues) spans Thr-13–Gly-50. Residues Arg-51–Gln-89 show a composition bias toward low complexity. The Q motif signature appears at Asn-147–Glu-175. The region spanning Ile-178–Ile-348 is the Helicase ATP-binding domain. Ala-191–Thr-198 contributes to the ATP binding site. The DEAD box motif lies at Asp-296–Asp-299. The Helicase C-terminal domain occupies Gly-358–Val-518.

This sequence belongs to the DEAD box helicase family. DDX6/DHH1 subfamily.

It is found in the cytoplasm. The protein localises to the P-body. It carries out the reaction ATP + H2O = ADP + phosphate + H(+). Functionally, ATP-dependent RNA helicase involved in mRNA turnover, and more specifically in mRNA decapping. The polypeptide is DEAD-box ATP-dependent RNA helicase 12 (Oryza sativa subsp. japonica (Rice)).